The chain runs to 161 residues: Tick receptor for ospA (161 aa).

As to quaternary structure, interacts with ospA protein from B.burgdorferi. Post-translationally, glycosylated. As to expression, specifically expressed in gut. Localizes predominantly in the intercellular spaces and luminal surface of the gut. In the gut, it localizes along tight junctions. Not expressed in salivary gland or hemolymph.

Its subcellular location is the cell membrane. Functionally, serves as a receptor for ospA protein of B.burgdorferi, the Lyme disease agent. Required for spirochetal colonization. Essential for pathogen adherence to the vector. The protein is Tick receptor for ospA (TROSPA) of Ixodes scapularis (Black-legged tick).